Reading from the N-terminus, the 592-residue chain is Threonine--tRNA ligase (592 aa).

The interval aspartate 193–proline 488 is catalytic. Positions 284, 335, and 465 each coordinate Zn(2+).

Belongs to the class-II aminoacyl-tRNA synthetase family. In terms of assembly, homodimer. Zn(2+) is required as a cofactor.

The protein resides in the cytoplasm. The catalysed reaction is tRNA(Thr) + L-threonine + ATP = L-threonyl-tRNA(Thr) + AMP + diphosphate + H(+). Functionally, catalyzes the attachment of threonine to tRNA(Thr) in a two-step reaction: L-threonine is first activated by ATP to form Thr-AMP and then transferred to the acceptor end of tRNA(Thr). Also edits incorrectly charged L-seryl-tRNA(Thr). The polypeptide is Threonine--tRNA ligase (Treponema pallidum (strain Nichols)).